Here is a 311-residue protein sequence, read N- to C-terminus: Cytosolic Fe-S cluster assembly factor Nubp1 homolog (311 aa).

[4Fe-4S] cluster-binding residues include Cys9, Cys23, Cys26, and Cys32. An ATP-binding site is contributed by 63 to 70; the sequence is GKGGVGKS. Residues Cys240 and Cys243 each contribute to the [4Fe-4S] cluster site.

Belongs to the Mrp/NBP35 ATP-binding proteins family. NUBP1/NBP35 subfamily. As to quaternary structure, heterotetramer of 2 Nubp1 and 2 Nubp2 chains. [4Fe-4S] cluster is required as a cofactor.

Its subcellular location is the cytoplasm. Functionally, component of the cytosolic iron-sulfur (Fe/S) protein assembly (CIA) machinery. Required for maturation of extramitochondrial Fe-S proteins. The Nubp1-Nubp2 heterotetramer forms a Fe-S scaffold complex, mediating the de novo assembly of an Fe-S cluster and its transfer to target apoproteins. This Drosophila pseudoobscura pseudoobscura (Fruit fly) protein is Cytosolic Fe-S cluster assembly factor Nubp1 homolog.